Here is a 150-residue protein sequence, read N- to C-terminus: Arginine repressor (150 aa).

The protein belongs to the ArgR family.

The protein resides in the cytoplasm. Its pathway is amino-acid biosynthesis; L-arginine biosynthesis [regulation]. Functionally, regulates arginine biosynthesis genes. The sequence is that of Arginine repressor from Symbiobacterium thermophilum (strain DSM 24528 / JCM 14929 / IAM 14863 / T).